The primary structure comprises 510 residues: Putative glycerol-3-phosphate transporter 3 (510 aa).

Helical transmembrane passes span 31–51, 91–111, 123–143, 158–178, 185–205, 217–237, 279–299, 331–351, 355–375, 378–398, 436–456, and 459–479; these read LSFKQYQAMVFVLTFIAYIAF, ALLGQIDLAFLSVYAVGMFVA, FLTIGMVGTGVCTALFGVAFW, LAGWFQSIGWPCVVAVLGNWF, VIMGVWSAHTSLGNIIGTLIA, FVGPALLITFLGIVVYLFLPV, VGFLAAWKIPGVAPFAFCLFF, GNLSTLFDVGGVVGGILAGYF, LDGRAITAGGFIYLTIPALFL, IYGHVSMTINIILMFVAGLFV, TGSVGAAIGPVLTGYIAAISW, and VFYMLMTAALISGLLLTTLII.

Belongs to the major facilitator superfamily. Organophosphate:Pi antiporter (OPA) (TC 2.A.1.4) family.

The protein resides in the membrane. The polypeptide is Putative glycerol-3-phosphate transporter 3 (Arabidopsis thaliana (Mouse-ear cress)).